The primary structure comprises 236 residues: Nopaline transport system permease protein NocQ (236 aa).

In terms of domain architecture, ABC transmembrane type-1 spans 21-222 (AMMTVVVAAC…LLSSVSNRGF (202 aa)). 4 helical membrane-spanning segments follow: residues 25 to 45 (VVVAACSYFFGIIFGSLFAAA), 63 to 83 (VVRGVPELLIIFLVFFGGGTL), 102 to 122 (IFVIGVLCISVSAGAYATEVI), and 199 to 219 (QPFTFYITAFVIFLLLSSVSN).

Belongs to the binding-protein-dependent transport system permease family. HisMQ subfamily.

Its subcellular location is the cell inner membrane. Its function is as follows. Component of the nopaline active transport system probably consisting of four subunits: Q, M, P and T. This system is also capable of transporting octopine provided that catabolic functions are induced with nopaline. The chain is Nopaline transport system permease protein NocQ (nocQ) from Agrobacterium fabrum (strain C58 / ATCC 33970) (Agrobacterium tumefaciens (strain C58)).